The chain runs to 97 residues: Putative defensin-like protein 227 (97 aa).

The first 26 residues, 1–26 (MKWATLFMVSCVLMFFVMNNINEVES), serve as a signal peptide directing secretion. Intrachain disulfides connect C35-C97, C45-C76, C53-C91, and C74-C93.

This sequence belongs to the DEFL family.

The protein localises to the secreted. The protein is Putative defensin-like protein 227 (SCRL28) of Arabidopsis thaliana (Mouse-ear cress).